Here is a 680-residue protein sequence, read N- to C-terminus: DNA-directed RNA polymerase subunit beta' (680 aa).

Residues Cys68, Cys70, Cys86, and Cys89 each contribute to the Zn(2+) site. Residues Asp488, Asp490, and Asp492 each contribute to the Mg(2+) site.

The protein belongs to the RNA polymerase beta' chain family. RpoC1 subfamily. In terms of assembly, in plastids the minimal PEP RNA polymerase catalytic core is composed of four subunits: alpha, beta, beta', and beta''. When a (nuclear-encoded) sigma factor is associated with the core the holoenzyme is formed, which can initiate transcription. The cofactor is Mg(2+). It depends on Zn(2+) as a cofactor.

It localises to the plastid. The protein localises to the chloroplast. The catalysed reaction is RNA(n) + a ribonucleoside 5'-triphosphate = RNA(n+1) + diphosphate. In terms of biological role, DNA-dependent RNA polymerase catalyzes the transcription of DNA into RNA using the four ribonucleoside triphosphates as substrates. The polypeptide is DNA-directed RNA polymerase subunit beta' (Nicotiana tabacum (Common tobacco)).